We begin with the raw amino-acid sequence, 250 residues long: Small ribosomal subunit protein uS2 (250 aa).

The protein belongs to the universal ribosomal protein uS2 family.

In Paraburkholderia xenovorans (strain LB400), this protein is Small ribosomal subunit protein uS2.